The sequence spans 135 residues: Protein PsiE homolog (135 aa).

Transmembrane regions (helical) follow at residues 20–40, 54–74, 82–102, and 107–127; these read VGLIALAAILVVFLIKETFHL, YMLIEGIVIYFLYFEFIALIV, HFPLRYFIYIGITAIIRLIIV, and PIDTLIYSGSILLLVVTLYLA.

The protein belongs to the PsiE family.

It localises to the cell inner membrane. This is Protein PsiE homolog from Yersinia enterocolitica serotype O:8 / biotype 1B (strain NCTC 13174 / 8081).